The primary structure comprises 330 residues: Polygalacturonase inhibitor (330 aa).

An N-terminal signal peptide occupies residues 1 to 24 (MELKFSTFLSLTLLFSSVLNPALS). Disulfide bonds link C27/C57 and C58/C65. LRR repeat units lie at residues 69–92 (TNRINSLTIFAGQVSGQIPALVGD), 93–118 (LPYLETLEFHKQPNLTGPIQPAIAKL), 119–141 (KGLKSLRLSWTNLSGSVPDFLSQ), 142–166 (LKNLTFLDLSFNNLTGAIPSSLSEL), 167–192 (PNLGALRLDRNKLTGHIPISFGQFIG), 194–215 (VPDLYLSHNQLSGNIPTSFAQM), and 217–237 (FTSIDLSRNKLEGDASVIFGL). N106, N130, N144, and N154 each carry an N-linked (GlcNAc...) asparagine glycan. N238 and N254 each carry an N-linked (GlcNAc...) asparagine glycan. LRR repeat units lie at residues 239–261 (KTTQIVDLSRNLLEFNLSKVEFP), 262–285 (TSLTSLDINHNKIYGSIPVEFTQL), and 287–309 (FQFLNVSYNRLCGQIPVGGKLQS). A glycan (N-linked (GlcNAc...) asparagine) is linked at N291. Intrachain disulfides connect C298–C320 and C322–C329.

Belongs to the polygalacturonase-inhibiting protein family. As to quaternary structure, homodimer. N-linked glycosylated. Mostly expressed in fruits, and, to a lower extent, in flowers and leaves.

It localises to the secreted. Its subcellular location is the extracellular space. The protein localises to the apoplast. It is found in the cell wall. In terms of biological role, inhibitor of fungal polygalacturonase. It is an important factor for plant resistance to phytopathogenic fungi. This chain is Polygalacturonase inhibitor (PGIP), found in Pyrus communis (Pear).